The chain runs to 853 residues: DNA mismatch repair protein MutS (853 aa).

614–621 contributes to the ATP binding site; it reads GPNMGGKS.

Belongs to the DNA mismatch repair MutS family.

Functionally, this protein is involved in the repair of mismatches in DNA. It is possible that it carries out the mismatch recognition step. This protein has a weak ATPase activity. This chain is DNA mismatch repair protein MutS, found in Escherichia coli O6:K15:H31 (strain 536 / UPEC).